The primary structure comprises 741 residues: Condensin complex subunit 2 (741 aa).

The tract at residues 1–67 (MGPPGPALPA…NDDEKERLQR (67 aa)) is disordered. Serine 15, serine 25, and serine 28 each carry phosphoserine. Phosphothreonine is present on threonine 49. Phosphoserine is present on residues serine 70, serine 78, serine 81, serine 87, serine 89, serine 92, serine 96, serine 201, and serine 233. Residues 361 to 377 (CGDFPDGSLGDDFDAND) are compositionally biased toward acidic residues. The disordered stretch occupies residues 361–383 (CGDFPDGSLGDDFDANDEPDHTA). Serine 432 is modified (phosphoserine). The tract at residues 447–467 (FRPRRKQDAPSQSENKKKSTK) is disordered. Residue lysine 488 forms a Glycyl lysine isopeptide (Lys-Gly) (interchain with G-Cter in SUMO2) linkage. Serine 496 bears the Phosphoserine mark. Residues threonine 598 and threonine 605 each carry the phosphothreonine modification. Lysine 637 bears the N6-acetyllysine mark.

The protein belongs to the CND2 (condensin subunit 2) family. As to quaternary structure, component of the condensin complex, which contains the SMC2 and SMC4 heterodimer, and three non SMC subunits that probably regulate the complex: NCAPH/BRRN1, NCAPD2/CAPD2 and NCAPG. Post-translationally, phosphorylated by CDK1. Its phosphorylation, as well as that of NCAPD2 and NCAPG subunits, activates the condensin complex and is required for chromosome condensation. Widely expressed at low level. Expressed in proliferating cells.

Its subcellular location is the nucleus. It localises to the cytoplasm. The protein localises to the chromosome. In terms of biological role, regulatory subunit of the condensin complex, a complex required for conversion of interphase chromatin into mitotic-like condense chromosomes. The condensin complex probably introduces positive supercoils into relaxed DNA in the presence of type I topoisomerases and converts nicked DNA into positive knotted forms in the presence of type II topoisomerases. Early in neurogenesis, may play an essential role to ensure accurate mitotic chromosome condensation in neuron stem cells, ultimately affecting neuron pool and cortex size. The protein is Condensin complex subunit 2 of Homo sapiens (Human).